Consider the following 89-residue polypeptide: uncharacterized protein (89 aa).

The next 2 helical transmembrane spans lie at 11–31 and 63–83; these read IFGAVILVSMIGALVAEPIAL and AAISAALGPAGLASGVFTVVF.

The protein resides in the cell membrane. This is an uncharacterized protein from Methanocaldococcus jannaschii (strain ATCC 43067 / DSM 2661 / JAL-1 / JCM 10045 / NBRC 100440) (Methanococcus jannaschii).